Reading from the N-terminus, the 364-residue chain is Peptide chain release factor 1 (364 aa).

Q238 is subject to N5-methylglutamine.

It belongs to the prokaryotic/mitochondrial release factor family. Methylated by PrmC. Methylation increases the termination efficiency of RF1.

Its subcellular location is the cytoplasm. Functionally, peptide chain release factor 1 directs the termination of translation in response to the peptide chain termination codons UAG and UAA. This chain is Peptide chain release factor 1, found in Psychrobacter sp. (strain PRwf-1).